The following is a 569-amino-acid chain: Urease subunit alpha (569 aa).

Ni(2+)-binding residues include His136, His138, and Lys219. N6-carboxylysine is present on Lys219. Residue His221 participates in substrate binding. 2 residues coordinate Ni(2+): His248 and His274. His322 functions as the Proton donor in the catalytic mechanism. Position 362 (Asp362) interacts with Ni(2+).

This sequence belongs to the metallo-dependent hydrolases superfamily. Urease alpha subunit family. Heterotrimer of UreA (gamma), UreB (beta) and UreC (alpha) subunits. Three heterotrimers associate to form the active enzyme. Ni cation serves as cofactor. In terms of processing, carboxylation allows a single lysine to coordinate two nickel ions.

It localises to the cytoplasm. The enzyme catalyses urea + 2 H2O + H(+) = hydrogencarbonate + 2 NH4(+). It participates in nitrogen metabolism; urea degradation; CO(2) and NH(3) from urea (urease route): step 1/1. The chain is Urease subunit alpha from Dinoroseobacter shibae (strain DSM 16493 / NCIMB 14021 / DFL 12).